The primary structure comprises 508 residues: Chromosomal replication initiator protein DnaA (508 aa).

Residues 1-91 are domain I, interacts with DnaA modulators; it reads MADDPGSSFT…TDALSRRLGQ (91 aa). Positions 91-167 are domain II; that stretch reads QQIQLGVRIA…AIDPAVAAGT (77 aa). The interval 104–152 is disordered; the sequence is DDVEDALIPSAEPFPDTDADLSARRRTDSRASGERGAVTNTQPGWTNYF. Residues 124 to 136 show a composition bias toward basic and acidic residues; that stretch reads LSARRRTDSRASG. Over residues 141 to 152 the composition is skewed to polar residues; sequence VTNTQPGWTNYF. The domain III, AAA+ region stretch occupies residues 168–384; that stretch reads SLNRRYTFDT…GALIRVTAFA (217 aa). ATP-binding residues include glycine 212, glycine 214, lysine 215, and threonine 216. The domain IV, binds dsDNA stretch occupies residues 385 to 508; the sequence is SLNKTPIDKS…TTRIRQRSKR (124 aa).

It belongs to the DnaA family. As to quaternary structure, oligomerizes as a right-handed, spiral filament on DNA at oriC.

Its subcellular location is the cytoplasm. Plays an essential role in the initiation and regulation of chromosomal replication. ATP-DnaA binds to the origin of replication (oriC) to initiate formation of the DNA replication initiation complex once per cell cycle. Binds the DnaA box (a 9 base pair repeat at the origin) and separates the double-stranded (ds)DNA. Forms a right-handed helical filament on oriC DNA; dsDNA binds to the exterior of the filament while single-stranded (ss)DNA is stabiized in the filament's interior. The ATP-DnaA-oriC complex binds and stabilizes one strand of the AT-rich DNA unwinding element (DUE), permitting loading of DNA polymerase. After initiation quickly degrades to an ADP-DnaA complex that is not apt for DNA replication. Binds acidic phospholipids. This Mycobacterium avium protein is Chromosomal replication initiator protein DnaA.